A 336-amino-acid chain; its full sequence is Dihydroorotate dehydrogenase (quinone) (336 aa).

FMN contacts are provided by residues 62–66 (AGLDK) and Thr86. Lys66 lines the substrate pocket. Residue 111–115 (NRMGF) participates in substrate binding. Residues Asn139 and Asn172 each contribute to the FMN site. Asn172 serves as a coordination point for substrate. The Nucleophile role is filled by Ser175. A substrate-binding site is contributed by Asn177. FMN-binding residues include Lys217 and Thr245. Position 246–247 (246–247 (NT)) interacts with substrate. Residues Gly268, Gly297, and 318-319 (YS) each bind FMN.

This sequence belongs to the dihydroorotate dehydrogenase family. Type 2 subfamily. In terms of assembly, monomer. The cofactor is FMN.

Its subcellular location is the cell membrane. The catalysed reaction is (S)-dihydroorotate + a quinone = orotate + a quinol. Its pathway is pyrimidine metabolism; UMP biosynthesis via de novo pathway; orotate from (S)-dihydroorotate (quinone route): step 1/1. Functionally, catalyzes the conversion of dihydroorotate to orotate with quinone as electron acceptor. The sequence is that of Dihydroorotate dehydrogenase (quinone) from Shigella dysenteriae serotype 1 (strain Sd197).